Here is a 450-residue protein sequence, read N- to C-terminus: Chromosomal replication initiator protein DnaA (450 aa).

Residues 1-76 (MNLNDILKEL…KKILKQPVNI (76 aa)) are domain I, interacts with DnaA modulators. Residues 76–107 (ISFTYEQEYQKQLEKTESINKDHSDIISKKNK) form a domain II region. Positions 108-327 (KVNENTFENF…GSVSRLNFWS (220 aa)) are domain III, AAA+ region. 4 residues coordinate ATP: Gly151, Gly153, Lys154, and Thr155. The tract at residues 328 to 450 (QQNPEEKVIT…DILKNKILTK (123 aa)) is domain IV, binds dsDNA.

This sequence belongs to the DnaA family. Oligomerizes as a right-handed, spiral filament on DNA at oriC.

The protein resides in the cytoplasm. It localises to the cell membrane. In terms of biological role, plays an essential role in the initiation and regulation of chromosomal replication. ATP-DnaA binds to the origin of replication (oriC) to initiate formation of the DNA replication initiation complex once per cell cycle. Binds the DnaA box (a 9 base pair repeat at the origin) and separates the double-stranded (ds)DNA. Forms a right-handed helical filament on oriC DNA; dsDNA binds to the exterior of the filament while single-stranded (ss)DNA is stabiized in the filament's interior. The ATP-DnaA-oriC complex binds and stabilizes one strand of the AT-rich DNA unwinding element (DUE), permitting loading of DNA polymerase. After initiation quickly degrades to an ADP-DnaA complex that is not apt for DNA replication. Binds acidic phospholipids. In Mycoplasma capricolum subsp. capricolum (strain California kid / ATCC 27343 / NCTC 10154), this protein is Chromosomal replication initiator protein DnaA.